The primary structure comprises 807 residues: SWI/SNF complex subunit SWI3C (807 aa).

Positions 1 to 74 (MPASEDRRGK…DPGLGIGEVV (74 aa)) are disordered. A compositionally biased stretch (acidic residues) spans 28–54 (EEEDMEEEDEENNNNNNEEMDDVENAD). The region spanning 176–274 (HVLPMHSDWF…YCATAQSHPG (99 aa)) is the SWIRM domain. The ZZ-type; degenerate zinc-finger motif lies at 340–394 (LCDSHCNHCSRPLPTVYFQSQKKGDILLCCDCFHHGRFVVGHSCLDFVRVDPMKF). The Zn(2+) site is built by C345, C348, C368, and C371. In terms of domain architecture, SANT spans 398–449 (QDGDNWTDQETLLLLEAVELYNENWVQIADHVGSKSKAQCILHFLRLPVEDG). Composition is skewed to polar residues over residues 458-467 (GVTNTENPTN) and 552-569 (ENQQ…NGAE). 2 disordered regions span residues 458–487 (GVTN…SEQG) and 549–571 (LDGE…AEAQ). A coiled-coil region spans residues 598–656 (ADHEEREIQRLSANIVNHQLKRMELKLKQFAEIETLLMKECEQVEKTRQRFSAERARML). Composition is skewed to low complexity over residues 692–703 (QHQQQQASATSQ) and 726–739 (QQQQ…QQQQ). 3 disordered regions span residues 692-713 (QHQQ…FSNN), 721-740 (HFMA…QQQA), and 781-807 (SINQ…LGLN). A compositionally biased stretch (gly residues) spans 798–807 (SGSGSGLGLN).

As to quaternary structure, heterodimer. Interacts with SWI3A, SWI3B and BRM, but not with BSH. Interacts with MORC6 and SUVH9. Expressed in roots, stems, leaves, flowers and siliques.

It localises to the nucleus. Component of a multiprotein complex equivalent of the SWI/SNF complex, an ATP-dependent chromatin-remodeling complex, which is required for the positive and negative regulation of gene expression of a large number of genes. It changes chromatin structure by altering DNA-histone contacts within a nucleosome, leading eventually to a change in nucleosome position, thus facilitating or repressing binding of gene-specific transcription factors. The protein is SWI/SNF complex subunit SWI3C (SWI3C) of Arabidopsis thaliana (Mouse-ear cress).